The primary structure comprises 872 residues: Cilia- and flagella-associated protein 58 (872 aa).

2 coiled-coil regions span residues 106–595 (VDSA…ADGE) and 642–839 (ESQY…QKNK).

The protein belongs to the CFAP58 family. In terms of assembly, interacts with ODFP2.

The protein localises to the cell projection. Its subcellular location is the cilium. It localises to the flagellum. The protein resides in the cytoplasm. It is found in the cytoskeleton. The protein localises to the microtubule organizing center. Its subcellular location is the centrosome. Has an essential role in the assembly and organization of the sperm flagellar axoneme. Required for the elongation of the primary cilium and sperm flagellar midpiece via modulation of the Notch signaling pathway. In Homo sapiens (Human), this protein is Cilia- and flagella-associated protein 58.